Here is a 90-residue protein sequence, read N- to C-terminus: Large ribosomal subunit protein eL31 (90 aa).

Belongs to the eukaryotic ribosomal protein eL31 family.

The polypeptide is Large ribosomal subunit protein eL31 (Thermococcus gammatolerans (strain DSM 15229 / JCM 11827 / EJ3)).